A 152-amino-acid chain; its full sequence is Ribosome maturation factor RimP (152 aa).

The protein belongs to the RimP family.

It localises to the cytoplasm. Required for maturation of 30S ribosomal subunits. This Proteus mirabilis (strain HI4320) protein is Ribosome maturation factor RimP.